The chain runs to 1534 residues: DNA polymerase alpha catalytic subunit (1534 aa).

Residues 1-12 show a composition bias toward low complexity; sequence MDEGSADAGASG. Disordered regions lie at residues 1 to 23, 96 to 141, and 864 to 905; these read MDEGSADAGASGRRSRARGSEAV, THRT…LSAA, and FNST…GPSY. Over residues 116-125 the composition is skewed to basic residues; it reads RKRKQPRPQS. Over residues 127–141 the composition is skewed to low complexity; sequence RPPQQSAAAASLSAA. 2 stretches are compositionally biased toward basic and acidic residues: residues 864–882 and 889–898; these read FNSTKRKMNPDTEAARPDE and DEGHHVDQGK. Cys1340, Cys1343, Cys1383, Cys1386, Cys1422, Cys1427, Cys1448, and Cys1454 together coordinate Zn(2+). The CysA-type zinc finger occupies 1340–1386; the sequence is CPSCSTTFDCPPVSSLIIGSSSGNVSNPNEGNDASINFWRRMRCPRC. The short motif at 1422-1451 is the CysB motif element; the sequence is CDDEGCKYSTHSVNLRVMGDSERGTICPNY.

This sequence belongs to the DNA polymerase type-B family.

It localises to the nucleus. The enzyme catalyses DNA(n) + a 2'-deoxyribonucleoside 5'-triphosphate = DNA(n+1) + diphosphate. Its function is as follows. Polymerase alpha in a complex with DNA primase is a replicative polymerase. This is DNA polymerase alpha catalytic subunit from Oryza sativa subsp. japonica (Rice).